The primary structure comprises 477 residues: MSQKFDVIVIGAGPGGYVAAIKSAQLGLKTALIEKYKGKEGKTALGGTCLNVGCIPSKALLDSSYKFHEAHESFKLHGISTGEVAIDVPTMIARKDQIVRNLTGGVASLIKANGVTLFEGHGKLLAGKKVEVTAADGSSQVLDTENVILASGSKPVEIPPAPVDQDVIVDSTGALDFQNVPGKLGVIGAGVIGLELGSVWARLGAEVTVLEAMDKFLPAVDEQVAKEAQKILTKQGLKILLGARVTGTEVKNKQVTVKFVDAEGEKSQAFDKLIVAVGRRPVTTDLLAADSGVTLDERGFIYVDDYCATSVPGVYAIGDVVRGAMLAHKASEEGVVVAERIAGHKAQMNYDLIPAVIYTHPEIAGVGKTEQALKAEGVAINVGVFPFAASGRAMAANDTAGFVKVIADAKTDRVLGVHVIGPSAAELVQQGAIAMEFGTSAEDLGMMVFAHPALSEALHEAALAVSGHAIHVANRKK.

Residues 34 to 49, Lys-58, and Gly-122 contribute to the FAD site; that span reads EKYKGKEGKTALGGTC. Cys-49 and Cys-54 are disulfide-bonded. NAD(+)-binding positions include 188–192, Glu-211, Val-245, and 276–279; these read GAGVI and AVGR. Asp-319 and Ala-327 together coordinate FAD. The active-site Proton acceptor is His-451.

The protein belongs to the class-I pyridine nucleotide-disulfide oxidoreductase family. As to quaternary structure, homodimer. The cofactor is FAD.

It is found in the cytoplasm. It catalyses the reaction N(6)-[(R)-dihydrolipoyl]-L-lysyl-[protein] + NAD(+) = N(6)-[(R)-lipoyl]-L-lysyl-[protein] + NADH + H(+). Functionally, the pyruvate dehydrogenase complex catalyzes the overall conversion of pyruvate to acetyl-CoA and CO(2). It contains multiple copies of three enzymatic components: pyruvate dehydrogenase (E1), dihydrolipoamide acetyltransferase (E2) and lipoamide dehydrogenase (E3). This is Dihydrolipoyl dehydrogenase from Azotobacter vinelandii.